A 93-amino-acid polypeptide reads, in one-letter code: Defensin-like protein 229 (93 aa).

The first 19 residues, 1–19 (MKSTTLFMVSCVLIFCVLS), serve as a signal peptide directing secretion. 4 disulfides stabilise this stretch: C38–C93, C48–C72, C56–C84, and C70–C86.

It belongs to the DEFL family. In terms of tissue distribution, flower buds.

It localises to the secreted. The chain is Defensin-like protein 229 (SCRL27) from Arabidopsis thaliana (Mouse-ear cress).